Consider the following 141-residue polypeptide: MAKKVVAQVRLQLEAGKATPAPPVGPALGQRGVNLMEFCKKFNAATADKAGMIIPVIITVYEDRSFTFITKTPPASFLLKKAAKLNSGSQEPKRKMVGKVTRDQIKEIAEIKMKDLNANDIEAAMKIIEGTAKSMGIEVVD.

Belongs to the universal ribosomal protein uL11 family. In terms of assembly, part of the ribosomal stalk of the 50S ribosomal subunit. Interacts with L10 and the large rRNA to form the base of the stalk. L10 forms an elongated spine to which L12 dimers bind in a sequential fashion forming a multimeric L10(L12)X complex. Post-translationally, one or more lysine residues are methylated.

In terms of biological role, forms part of the ribosomal stalk which helps the ribosome interact with GTP-bound translation factors. This is Large ribosomal subunit protein uL11 from Thermosipho africanus (strain TCF52B).